The chain runs to 352 residues: Holliday junction branch migration complex subunit RuvB (352 aa).

Residues 4–185 form a large ATPase domain (RuvB-L) region; sequence PDRLISAVSG…FGIVQRLEFY (182 aa). Residues Ile24, Arg25, Gly66, Lys69, Thr70, Thr71, 132–134, Arg175, Tyr185, and Arg222 each bind ATP; that span reads EDF. Thr70 contacts Mg(2+). Positions 186-256 are small ATPAse domain (RuvB-S); sequence NVEDLATIVS…IADKALNLLD (71 aa). The interval 259 to 352 is head domain (RuvB-H); the sequence is ERGFDHLDRR…SDLFTSEDGN (94 aa). Residues Arg295, Arg314, and Arg319 each contribute to the DNA site.

The protein belongs to the RuvB family. As to quaternary structure, homohexamer. Forms an RuvA(8)-RuvB(12)-Holliday junction (HJ) complex. HJ DNA is sandwiched between 2 RuvA tetramers; dsDNA enters through RuvA and exits via RuvB. An RuvB hexamer assembles on each DNA strand where it exits the tetramer. Each RuvB hexamer is contacted by two RuvA subunits (via domain III) on 2 adjacent RuvB subunits; this complex drives branch migration. In the full resolvosome a probable DNA-RuvA(4)-RuvB(12)-RuvC(2) complex forms which resolves the HJ.

It localises to the cytoplasm. The catalysed reaction is ATP + H2O = ADP + phosphate + H(+). In terms of biological role, the RuvA-RuvB-RuvC complex processes Holliday junction (HJ) DNA during genetic recombination and DNA repair, while the RuvA-RuvB complex plays an important role in the rescue of blocked DNA replication forks via replication fork reversal (RFR). RuvA specifically binds to HJ cruciform DNA, conferring on it an open structure. The RuvB hexamer acts as an ATP-dependent pump, pulling dsDNA into and through the RuvAB complex. RuvB forms 2 homohexamers on either side of HJ DNA bound by 1 or 2 RuvA tetramers; 4 subunits per hexamer contact DNA at a time. Coordinated motions by a converter formed by DNA-disengaged RuvB subunits stimulates ATP hydrolysis and nucleotide exchange. Immobilization of the converter enables RuvB to convert the ATP-contained energy into a lever motion, pulling 2 nucleotides of DNA out of the RuvA tetramer per ATP hydrolyzed, thus driving DNA branch migration. The RuvB motors rotate together with the DNA substrate, which together with the progressing nucleotide cycle form the mechanistic basis for DNA recombination by continuous HJ branch migration. Branch migration allows RuvC to scan DNA until it finds its consensus sequence, where it cleaves and resolves cruciform DNA. The sequence is that of Holliday junction branch migration complex subunit RuvB from Pseudomonas paraeruginosa (strain DSM 24068 / PA7) (Pseudomonas aeruginosa (strain PA7)).